The sequence spans 126 residues: Large ribosomal subunit protein uL29 (126 aa).

It belongs to the universal ribosomal protein uL29 family.

The chain is Large ribosomal subunit protein uL29 (rpl35) from Dictyostelium discoideum (Social amoeba).